A 577-amino-acid polypeptide reads, in one-letter code: Arginine--tRNA ligase (577 aa).

A 'HIGH' region motif is present at residues 122–132 (PNVAKEMHVGH).

This sequence belongs to the class-I aminoacyl-tRNA synthetase family. In terms of assembly, monomer.

The protein localises to the cytoplasm. It carries out the reaction tRNA(Arg) + L-arginine + ATP = L-arginyl-tRNA(Arg) + AMP + diphosphate. The chain is Arginine--tRNA ligase (argS) from Salmonella typhimurium (strain SL1344).